The chain runs to 324 residues: Aquaporin-4 (324 aa).

Residues methionine 1–lysine 36 are Cytoplasmic-facing. S-palmitoyl cysteine attachment occurs at residues cysteine 13 and cysteine 17. A helical membrane pass occupies residues alanine 37 to isoleucine 57. The Extracellular portion of the chain corresponds to asparagine 58–aspartate 69. The chain crosses the membrane as a helical span at residues methionine 70 to glycine 89. Over histidine 90–glycine 93 the chain is Cytoplasmic. Residues glycine 94–threonine 101 constitute an intramembrane region (discontinuously helical). The NPA 1 signature appears at asparagine 97 to alanine 99. At valine 102 to serine 115 the chain is on the cytoplasmic side. The residue at position 111 (serine 111) is a Phosphoserine; by PKG. A helical membrane pass occupies residues valine 116–valine 136. At threonine 137 to threonine 155 the chain is on the extracellular side. Asparagine 153 is a glycosylation site (N-linked (GlcNAc...) asparagine). A helical transmembrane segment spans residues alanine 156–alanine 176. The Cytoplasmic segment spans residues serine 177–aspartate 184. Serine 180 is subject to Phosphoserine; by PKC. Residues valine 185 to isoleucine 205 form a helical membrane-spanning segment. Asparagine 206 carries an N-linked (GlcNAc...) asparagine glycan. Residues asparagine 206 to threonine 208 lie on the Extracellular side of the membrane. Positions glycine 209–valine 222 form an intramembrane region, discontinuously helical. The NPA 2 motif lies at asparagine 213–alanine 215. Residues isoleucine 223–tryptophan 231 lie on the Extracellular side of the membrane. The chain crosses the membrane as a helical span at residues isoleucine 232–phenylalanine 252. The Cytoplasmic segment spans residues cysteine 253–histidine 324. Residues serine 276 and serine 285 each carry the phosphoserine modification. The residue at position 289 (threonine 289) is a Phosphothreonine. Residues aspartate 305–serine 316 show a composition bias toward basic and acidic residues. Positions aspartate 305 to histidine 324 are disordered.

This sequence belongs to the MIP/aquaporin (TC 1.A.8) family. As to quaternary structure, homotetramer. The tetramers can form oligomeric arrays in membranes. The size of the oligomers differs between tissues and is smaller in skeletal muscle than in brain. Interaction between AQP4 oligomeric arrays in close-by cells can contribute to cell-cell adhesion. Part of a complex containing MLC1, TRPV4, HEPACAM and ATP1B1. In terms of processing, phosphorylation by PKC at Ser-180 reduces conductance by 50%. Phosphorylation by PKG at Ser-111 in response to glutamate increases conductance by 40%. Isoform 2: Palmitoylated on its N-terminal region. Isoform 1: Not palmitoylated. Not expressed in kidney, Detectable in gastric parietal and brain astroglial cells. The absence of AQP4 in kidney may be critical for the extreme urinary concentration that occurs in this species (up to 5,000 mosmol/kg H(2)O).

It is found in the cell membrane. It localises to the basolateral cell membrane. The protein localises to the endosome membrane. Its subcellular location is the sarcolemma. The protein resides in the cell projection. The catalysed reaction is H2O(in) = H2O(out). Forms a water-specific channel. Plays an important role in brain water homeostasis and in glymphatic solute transport. Required for a normal rate of water exchange across the blood brain interface. Required for normal levels of cerebrospinal fluid influx into the brain cortex and parenchyma along paravascular spaces that surround penetrating arteries, and for normal drainage of interstitial fluid along paravenous drainage pathways. Thereby, it is required for normal clearance of solutes from the brain interstitial fluid, including soluble beta-amyloid peptides derived from APP. Plays a redundant role in urinary water homeostasis and urinary concentrating ability. In Dipodomys merriami (Merriam's kangaroo rat), this protein is Aquaporin-4 (AQP4).